A 479-amino-acid polypeptide reads, in one-letter code: Spindly-like protein spdl-1 (479 aa).

3 coiled-coil regions span residues 4 to 180, 210 to 250, and 321 to 357; these read DEEK…EGEL, EEDL…RFNV, and LMKDNEKYVTIIRGLQQEVENLKADIVQLQFDNKCAH.

As to quaternary structure, interacts with Zwilch homolog zwl-1, a component of the RZZ complex. Interacts with mdf-1 and mdf-2.

The protein resides in the chromosome. The protein localises to the centromere. Its subcellular location is the kinetochore. It localises to the cytoplasm. It is found in the cytoskeleton. The protein resides in the spindle pole. Functionally, transient kinetochore component required for chromosome and spindle pole alignment and chromosome segregation during mitosis. Functions downstream of the RZZ complex to mediate kinetochore-microtubule attachments and nuclear envelope breakdown during cell division. Required for kinetochore assembly and localizes the checkpoint proteins mdf-1 and mdf-2, dynein and dynactin to unattached kinetochores. Dynein is believed to control the initial lateral interaction between the kinetochore and spindle microtubules and to facilitate the subsequent formation of end-on kinetochore-microtubule attachments mediated by the NDC80 complex. Required for embryonic development. This chain is Spindly-like protein spdl-1, found in Caenorhabditis elegans.